The sequence spans 574 residues: Interleukin-1 receptor-like 2 (574 aa).

The N-terminal stretch at 1–21 (MGVTSLLFCGVFFLLLLFVAA) is a signal peptide. Residues 22–338 (DTCEDIFMHN…ILIYPVPDFR (317 aa)) lie on the Extracellular side of the membrane. Ig-like C2-type domains lie at 25 to 113 (EDIF…VNLT), 132 to 215 (PDVY…IRNY), and 225 to 321 (YGRR…TCHA). 3 N-linked (GlcNAc...) asparagine glycosylation sites follow: N43, N55, and N111. C44 and C97 form a disulfide bridge. A disulfide bond links C149 and C199. N-linked (GlcNAc...) asparagine glycans are attached at residues N231, N237, N253, N269, N290, and N302. Residues C252 and C319 are joined by a disulfide bond. Residues 339 to 359 (AYLLGGLMAFLLLVVSVLFIY) traverse the membrane as a helical segment. Topologically, residues 360–574 (NSFKIDIMLW…CNAATGLITP (215 aa)) are cytoplasmic. Residues 384 to 539 (KLYDAYVLYP…KFWKKVRYHM (156 aa)) form the TIR domain. E470 is an active-site residue.

Belongs to the interleukin-1 receptor family. Interacts with IL1RAP; the association is enhanced by IL36B indicative for an functional signaling complex and inhibited by IL36RN. In terms of tissue distribution, expressed in bone marrow-derived dendritic cells, splenic CD4(+) T-cells, bone marrow-derived macrophages and bone marrow-derived neutrophils.

It localises to the membrane. It carries out the reaction NAD(+) + H2O = ADP-D-ribose + nicotinamide + H(+). In terms of biological role, receptor for interleukin-36 (IL36A, IL36B and IL36G). After binding to interleukin-36 associates with the coreceptor IL1RAP to form the interleukin-36 receptor complex which mediates interleukin-36-dependent activation of NF-kappa-B, MAPK and other pathways. The IL-36 signaling system is thought to be present in epithelial barriers and to take part in local inflammatory response; it is similar to the IL-1 system. Seems to be involved in skin inflammatory response by induction of the IL-23/IL-17/IL-22 pathway. This is Interleukin-1 receptor-like 2 (Il1rl2) from Mus musculus (Mouse).